The following is a 139-amino-acid chain: uncharacterized protein (139 aa).

The next 2 membrane-spanning stretches (helical) occupy residues 35 to 55 (LVFL…SFLI) and 57 to 77 (FGIL…LTVI).

The protein resides in the membrane. This is an uncharacterized protein from Saccharomyces cerevisiae (strain ATCC 204508 / S288c) (Baker's yeast).